A 546-amino-acid polypeptide reads, in one-letter code: MGRTRVVIWFRNDLRLLDNACVARAATLASESSDVEVVPVYVFDETYFKPSKRGLARFGAGRGKFTLECVGDLKTSLRALGSDLLVRCGKSRDVIAELTLTGANDRTIILTQTEVTSEETEMDVAVERATRERARGGAASATMERHWGSTLYHIDDVPFDVTSGLSDLPDVFTPFRNKVESKCKVRDVIPAPTANELGHVPASVEGFEWMPKPSDLPFASSEIAMDCDKRIKDCLDERSVLDFKGGESNALARVKYYLWESDRLATYFETRNGMLGGDYSTKLAPWLALGCVSPRHVVSEIRRYESERVENKSTYWVIFELIWRDFFKFFALKHGNKIFHLDGTAGRRASWKRDEKILKAWKTGTTGYPLIDANMRELAATGFMSNRGRQNVASWLALDAGIDWRHGADWFEHHLLDYDTASNWGNWCAAAGMTGGRINRFNIAKQTKDYDPAGEYIKTWVKELAEVPAAYIADPNQAPRELRDRIGLNYPNKLALPRRDFTEMGSPPGPRRGGGGGGRGRGRPGGSTPNRGTKARVASVYDTVYG.

Residues 4–151 form the Photolyase/cryptochrome alpha/beta domain; sequence TRVVIWFRND…TMERHWGSTL (148 aa). A disordered region spans residues 497–546; that stretch reads PRRDFTEMGSPPGPRRGGGGGGRGRGRPGGSTPNRGTKARVASVYDTVYG. Residues 511–525 are compositionally biased toward gly residues; the sequence is RRGGGGGGRGRGRPG.

It belongs to the DNA photolyase class-1 family. The cofactor is FAD. (6R)-5,10-methylene-5,6,7,8-tetrahydrofolate is required as a cofactor.

Its subcellular location is the plastid. It localises to the chloroplast. The protein localises to the mitochondrion. May have a photoreceptor function. Binds ss- and ds-DNA in a sequence non-specific manner, lacks photolyase activity. The polypeptide is Cryptochrome DASH, chloroplastic/mitochondrial (Ostreococcus tauri).